A 208-amino-acid polypeptide reads, in one-letter code: Uridine kinase (208 aa).

11-18 (GGSGSGKT) serves as a coordination point for ATP.

This sequence belongs to the uridine kinase family.

The protein localises to the cytoplasm. It carries out the reaction uridine + ATP = UMP + ADP + H(+). The enzyme catalyses cytidine + ATP = CMP + ADP + H(+). The protein operates within pyrimidine metabolism; CTP biosynthesis via salvage pathway; CTP from cytidine: step 1/3. It functions in the pathway pyrimidine metabolism; UMP biosynthesis via salvage pathway; UMP from uridine: step 1/1. The chain is Uridine kinase from Staphylococcus carnosus (strain TM300).